Reading from the N-terminus, the 444-residue chain is MPEGAGRPWNLTELEEEKLKTMWSYLFKLFGITLLERTESWYTVKTHLSDDSSSSSSHRLSSVSYAKSRTRLELTSSSHGSDTRSFNDKTKNVHLERVEKIASEWDPEGLRVCFWDAVNCDDPDGLLLRFLRARKWNVEAALEMFMKTVHWRSREMNVGEIVCNADHLDKDDDFVRQLRIGKCFIFGEDKHNRPVCYIRARLHKVGDVSPESVERLTVWVMETARLILKPPIETATVVFDMTDFSMSNMDYGPLKFMIKCFEAHYPECLGECIVHKAPWLFQGVWSIIKSWLDPVVVSKVKFTRNYRDLQQYINPDNILKEFGGPNPWRYTYPEPCQNEAEALKNVEARKSLRAKKDAIAKQYEEVTMDWILNNGDMAEVKQKRRKLASQLIDAYWNLDKYIRARSVYDRMGLIAPQTSHTLLLSQPTNGDVKESMVEVTSSAT.

Ser40 is modified (phosphoserine). Phosphothreonine is present on Thr43. Ser81 carries the post-translational modification Phosphoserine. A CRAL-TRIO domain is found at 171–330; sequence DDDFVRQLRI…EFGGPNPWRY (160 aa). Thr418 carries the post-translational modification Phosphothreonine.

This is CRAL-TRIO domain-containing protein C3H8.02 from Schizosaccharomyces pombe (strain 972 / ATCC 24843) (Fission yeast).